Consider the following 344-residue polypeptide: Calcium homeostasis modulator protein 3 (344 aa).

Residues 1-20 are Cytoplasmic-facing; that stretch reads MDKFRMLFQHFQSSSESVMN. The interval 9-36 is central pore; the sequence is QHFQSSSESVMNGICLLLAAVTVKLYSS. A helical transmembrane segment spans residues 21-36; sequence GICLLLAAVTVKLYSS. The Extracellular portion of the chain corresponds to 37-48; it reads FDFNCPCLVHYN. Cystine bridges form between Cys41-Cys126 and Cys43-Cys157. Residues 49–71 form a helical membrane-spanning segment; sequence ALYGLGLLLTPPLALFLCGLLAN. Residues 72-98 are Cytoplasmic-facing; that stretch reads RQSVVMVEEWRRPAGHRRKDPGIIRYM. Residue Cys99 is the site of S-palmitoyl cysteine attachment. A helical transmembrane segment spans residues 99-124; that stretch reads CSSVLQRALAAPLVWILLALLDGKCF. At 125–176 the chain is on the extracellular side; the sequence is VCAFSSSVDPEKFLDFANMTPSQVQLFLAKVPCKEDELVRDSPARKAVSRYL. N-linked (GlcNAc...) asparagine glycosylation occurs at Asn142. Residues 177–202 form a helical membrane-spanning segment; sequence RCLSQAIGWSVTLLLIIAAFLARCLR. S-palmitoyl cysteine attachment occurs at residues Cys200 and Cys204. Topologically, residues 203–344 are cytoplasmic; sequence PCFDQTVFLQ…GTRLSQHTDV (142 aa).

Belongs to the CALHM family. In terms of assembly, associates with CALHM1 as a pore-forming subunit in a hetero-hexameric channel complex. Post-translationally, N-glycosylated. In terms of processing, palmitoylated by ZDHHC3 and ZDHHC15. Palmitoylation positively regulates CALHM1:CALHM3 channel conductance. In terms of tissue distribution, specifically expressed in circumvallate taste bud cells.

Its subcellular location is the basolateral cell membrane. The enzyme catalyses ATP(in) = ATP(out). The catalysed reaction is Ca(2+)(in) = Ca(2+)(out). It catalyses the reaction Na(+)(in) = Na(+)(out). It carries out the reaction K(+)(in) = K(+)(out). The enzyme catalyses chloride(in) = chloride(out). Functionally, pore-forming subunit of gustatory voltage-gated ion channels required for sensory perception of sweet, bitter and umami tastes. With CALHM1 forms a fast-activating voltage-gated ATP-release channel in type II taste bud cells, ATP acting as a neurotransmitter to activate afferent neural gustatory pathways. Acts both as a voltage-gated and calcium-activated ion channel: mediates neuronal excitability in response to membrane depolarization and low extracellular Ca(2+) concentration. Has poor ion selectivity and forms a wide pore (around 14 Angstroms) that mediates permeation of small ions including Ca(2+), Na(+), K(+) and Cl(-), as well as larger ions such as ATP(4-). The chain is Calcium homeostasis modulator protein 3 from Homo sapiens (Human).